The chain runs to 2473 residues: Neurogenic locus notch homolog protein 2 (2473 aa).

An N-terminal signal peptide occupies residues 1 to 25; the sequence is MPALRPAALRALLWLWLCGAGPAHA. EGF-like domains follow at residues 26–63, 64–102, 105–143, and 144–180; these read LQCR…EYCQ, HRDP…EDCQ, TSHP…KQCQ, and WTDA…QKCE. The Extracellular portion of the chain corresponds to 26–1679; that stretch reads LQCRGGQEPC…SELESPRNAQ (1654 aa). Intrachain disulfides connect Cys28-Cys41, Cys35-Cys51, Cys53-Cys62, Cys68-Cys79, Cys73-Cys90, Cys92-Cys101, Cys109-Cys121, Cys115-Cys131, Cys133-Cys142, Cys148-Cys159, Cys153-Cys168, Cys170-Cys179, Cys186-Cys198, Cys192-Cys207, Cys209-Cys218, Cys230-Cys246, Cys248-Cys257, Cys264-Cys275, Cys269-Cys284, Cys286-Cys295, Cys302-Cys315, Cys309-Cys324, Cys326-Cys335, Cys342-Cys353, Cys347-Cys362, Cys364-Cys373, Cys379-Cys390, Cys384-Cys401, Cys403-Cys412, Cys419-Cys433, Cys427-Cys442, Cys444-Cys453, Cys460-Cys471, Cys465-Cys480, Cys482-Cys491, Cys498-Cys509, Cys503-Cys518, Cys520-Cys529, Cys536-Cys547, Cys541-Cys556, Cys558-Cys567, Cys574-Cys584, Cys579-Cys593, Cys595-Cys604, Cys611-Cys622, Cys616-Cys631, Cys633-Cys642, Cys649-Cys659, Cys654-Cys668, Cys670-Cys679, Cys686-Cys697, Cys691-Cys706, Cys708-Cys717, Cys724-Cys734, Cys729-Cys743, Cys745-Cys754, Cys761-Cys772, Cys766-Cys781, Cys783-Cys792, Cys799-Cys810, Cys804-Cys819, Cys821-Cys830, Cys837-Cys848, Cys842-Cys859, Cys861-Cys870, Cys877-Cys888, Cys882-Cys897, Cys899-Cys908, Cys915-Cys926, Cys920-Cys935, Cys937-Cys946, Cys953-Cys964, Cys958-Cys973, Cys975-Cys984, Cys991-Cys1002, Cys996-Cys1011, Cys1013-Cys1022, Cys1029-Cys1040, Cys1034-Cys1049, Cys1051-Cys1060, Cys1067-Cys1078, Cys1072-Cys1087, and Cys1089-Cys1098. A glycan (N-linked (GlcNAc...) asparagine) is linked at Asn46. N-linked (GlcNAc...) asparagine glycosylation occurs at Asn155. Positions 182 to 219 constitute an EGF-like 5; calcium-binding domain; sequence DINECDIPGRCQHGGTCLNLPGSYRCQCPQGFTGQHCD. In terms of domain architecture, EGF-like 6; incomplete spans 221–258; sequence PYVPCAPSPCVNGGTCRQTGDFTFECNCLPGFEGSTCE. The EGF-like 7; calcium-binding domain occupies 260 to 296; sequence NIDDCPNHKCQNGGVCVDGVNTYNCRCPPQWTGQFCT. The EGF-like 8; calcium-binding domain maps to 298–336; the sequence is DVDECLLQPNACQNGGTCTNRNGGYGCVCVNGWSGDDCS. The EGF-like 9; calcium-binding domain maps to 338–374; that stretch reads NIDDCAYASCTPGSTCIDRVASFSCLCPEGKAGLLCH. In terms of domain architecture, EGF-like 10 spans 375–413; the sequence is LDDACISNPCHKGALCDTNPLNGQYICTCPQGYKGADCT. One can recognise an EGF-like 11; calcium-binding domain in the interval 415–454; sequence DVDECAMANSNPCEHAGKCVNTDGAFHCECLKGYAGPRCE. Residues 456–492 enclose the EGF-like 12; calcium-binding domain; it reads DINECHSDPCQNDATCLDKIGGFTCLCMPGFKGVHCE. The EGF-like 13; calcium-binding domain maps to 494–530; sequence EVNECQSNPCVNNGQCVDKVNRFQCLCPPGFTGPVCQ. The region spanning 532–568 is the EGF-like 14; calcium-binding domain; sequence DIDDCSSTPCLNGAKCIDHPNGYECQCATGFTGILCD. In terms of domain architecture, EGF-like 15; calcium-binding spans 570-605; that stretch reads NIDNCDPDPCHHGQCQDGIDSYTCICNPGYMGAICS. One can recognise an EGF-like 16; calcium-binding domain in the interval 607–643; that stretch reads QIDECYSSPCLNDGRCIDLVNGYQCNCQPGTSGLNCE. Ser613 carries O-linked (Glc...) serine; alternate glycosylation. Ser613 is a glycosylation site (O-linked (Xyl...) serine; alternate). In terms of domain architecture, EGF-like 17; calcium-binding spans 645 to 680; it reads NFDDCASNPCMHGVCVDGINRYSCVCSPGFTGQRCN. Residues 682 to 718 form the EGF-like 18; calcium-binding domain; that stretch reads DIDECASNPCRKGATCINDVNGFRCICPEGPHHPSCY. Residues 720-755 enclose the EGF-like 19 domain; the sequence is QVNECLSNPCIHGNCTGGLSGYKCLCDAGWVGVNCE. Residue Asn733 is glycosylated (N-linked (GlcNAc...) asparagine). An EGF-like 20; calcium-binding domain is found at 757 to 793; sequence DKNECLSNPCQNGGTCNNLVNGYRCTCKKGFKGYNCQ. The EGF-like 21; calcium-binding domain maps to 795-831; it reads NIDECASNPCLNQGTCFDDVSGYTCHCMLPYTGKNCQ. Residues 833–871 enclose the EGF-like 22 domain; sequence VLAPCSPNPCENAAVCKEAPNFESFSCLCAPGWQGKRCT. The EGF-like 23; calcium-binding domain occupies 873 to 909; that stretch reads DVDECISKPCMNNGVCHNTQGSYVCECPPGFSGMDCE. The EGF-like 24; calcium-binding domain maps to 911–947; that stretch reads DINDCLANPCQNGGSCVDHVNTFSCQCHPGFIGDKCQ. Residues 949–985 enclose the EGF-like 25; calcium-binding domain; that stretch reads DMNECLSEPCKNGGTCSDYVNSYTCTCPAGFHGVHCE. The EGF-like 26; calcium-binding domain maps to 987-1023; it reads NIDECTESSCFNGGTCVDGINSFSCLCPVGFTGPFCL. The region spanning 1025–1061 is the EGF-like 27; calcium-binding domain; sequence DINECSSNPCLNAGTCVDGLGTYRCICPLGYTGKNCQ. 2 EGF-like domains span residues 1063–1099 and 1101–1147; these read LVNL…AYCD and LNVS…SYCE. A glycan (N-linked (GlcNAc...) asparagine) is linked at Asn1102. 24 disulfide bridges follow: Cys1105/Cys1126, Cys1120/Cys1135, Cys1137/Cys1146, Cys1153/Cys1164, Cys1158/Cys1173, Cys1175/Cys1184, Cys1191/Cys1202, Cys1196/Cys1211, Cys1213/Cys1222, Cys1229/Cys1241, Cys1235/Cys1250, Cys1252/Cys1261, Cys1268/Cys1281, Cys1273/Cys1290, Cys1292/Cys1301, Cys1308/Cys1319, Cys1313/Cys1331, Cys1333/Cys1346, Cys1378/Cys1389, Cys1383/Cys1400, Cys1402/Cys1411, Cys1425/Cys1448, Cys1430/Cys1443, and Cys1439/Cys1455. An EGF-like 30; calcium-binding domain is found at 1149-1185; it reads QLDECASNPCQHGATCNDFIGGYRCECVPGYQGVNCE. In terms of domain architecture, EGF-like 31; calcium-binding spans 1187–1223; it reads EVDECQNQPCQNGGTCIDLVNHFKCSCPPGTRGLLCE. Positions 1225–1262 constitute an EGF-like 32; calcium-binding domain; that stretch reads NIDECAGGPHCLNGGQCVDRIGGYTCRCLPGFAGERCE. 3 consecutive EGF-like domains span residues 1264-1302, 1304-1343, and 1375-1412; these read DINE…RHCE, FLDV…ARCQ, and ESGC…SHCE. LNR repeat units lie at residues 1425–1465, 1466–1502, and 1503–1544; these read CQSQ…PWAN, CTST…NSKT, and CKYD…NLAE. The segment at 1425–1679 is negative regulatory region (NRR); sequence CQSQYCADKA…SELESPRNAQ (255 aa). Asn1465 is a glycosylation site (N-linked (GlcNAc...) asparagine). 7 disulfide bridges follow: Cys1466-Cys1489, Cys1472-Cys1484, Cys1480-Cys1496, Cys1503-Cys1527, Cys1509-Cys1522, Cys1518-Cys1534, and Cys1634-Cys1641. The chain crosses the membrane as a helical span at residues 1680-1700; sequence LLYLLAVAVVIILFFILLGVI. Topologically, residues 1701–2473 are cytoplasmic; that stretch reads MAKRKRKHGF…PPHSNMQVYA (773 aa). A Phosphothreonine modification is found at Thr1718. Residues 1755-1778 are disordered; the sequence is GTSEHWVDDEGPQPKKAKAEDEAL. Ser1780 carries the post-translational modification Phosphoserine. A Phosphothreonine modification is found at Thr1803. A Phosphoserine modification is found at Ser1805. Thr1809 carries the phosphothreonine modification. ANK repeat units follow at residues 1828–1872, 1877–1906, 1910–1940, 1944–1973, 1977–2006, and 2010–2039; these read DGCT…SLQA, TGEM…DANA, MGRC…DLDA, DGTT…DVNA, HGKS…NRDM, and KEET…NRDI. Phosphoserine occurs at positions 1843 and 1846. Phosphoserine occurs at positions 2071, 2079, and 2082. Position 2098 is a phosphothreonine (Thr2098). 3 disordered regions span residues 2098–2117, 2122–2169, and 2382–2473; these read TPMG…PTSL, KEAK…TSSP, and VGKY…QVYA. Positions 2099-2108 are enriched in basic residues; the sequence is PMGKKARRPN. 2 stretches are compositionally biased toward polar residues: residues 2140-2151 and 2390-2400; these read VQLSESSVTLSP and SQHSYASSNAA. Residues 2419-2446 are compositionally biased toward low complexity; the sequence is PSPESPDQWSSSSPHSASDWSDVTTSPT. Residues 2447–2456 are compositionally biased toward gly residues; that stretch reads PGGGGGGQRG.

The protein belongs to the NOTCH family. As to quaternary structure, heterodimer of a C-terminal fragment N(TM) and an N-terminal fragment N(EC) which are probably linked by disulfide bonds. Interacts with MAML1, MAML2 and MAML3 which act as transcriptional coactivators for NOTCH2. Interacts with RELA/p65. Interacts with HIF1AN. Interacts (via ANK repeats) with TCIM, the interaction inhibits the nuclear translocation of NOTCH2 N2ICD. Interacts with CUL1, RBX1, SKP1 and FBXW7 that are SCF(FBXW7) E3 ubiquitin-protein ligase complex components. Interacts with MINAR1; this interaction increases MINAR1 stability and function. Interacts with MDK; this interaction mediates a nuclear accumulation of NOTCH2 and therefore activation of NOTCH2 signaling leading to interaction between HES1 and STAT3. Interacts with MINAR2. Post-translationally, synthesized in the endoplasmic reticulum as an inactive form which is proteolytically cleaved by a furin-like convertase in the trans-Golgi network before it reaches the plasma membrane to yield an active, ligand-accessible form. Cleavage results in a C-terminal fragment N(TM) and a N-terminal fragment N(EC). Following ligand binding, it is cleaved by TNF-alpha converting enzyme (TACE) to yield a membrane-associated intermediate fragment called notch extracellular truncation (NEXT). This fragment is then cleaved by presenilin dependent gamma-secretase to release a notch-derived peptide containing the intracellular domain (NICD) from the membrane. Hydroxylated by HIF1AN. In terms of processing, can be either O-glucosylated or O-xylosylated at Ser-613 by POGLUT1. Post-translationally, phosphorylated by GSK3. GSK3-mediated phosphorylation is necessary for NOTCH2 recognition by FBXW7, ubiquitination and degradation via the ubiquitin proteasome pathway. In terms of tissue distribution, expressed in the brain, liver, kidney, neuroepithelia, somites, optic vesicles and branchial arches, but not heart.

The protein resides in the cell membrane. It localises to the nucleus. It is found in the cytoplasm. Its function is as follows. Functions as a receptor for membrane-bound ligands Jagged-1 (JAG1), Jagged-2 (JAG2) and Delta-1 (DLL1) to regulate cell-fate determination. Upon ligand activation through the released notch intracellular domain (NICD) it forms a transcriptional activator complex with RBPJ/RBPSUH and activates genes of the enhancer of split locus. Affects the implementation of differentiation, proliferation and apoptotic programs. May play an essential role in postimplantation development, probably in some aspect of cell specification and/or differentiation. In collaboration with RELA/p65 enhances NFATc1 promoter activity and positively regulates RANKL-induced osteoclast differentiation. Positively regulates self-renewal of liver cancer cells. This is Neurogenic locus notch homolog protein 2 from Mus musculus (Mouse).